Here is a 695-residue protein sequence, read N- to C-terminus: ATP-dependent DNA helicase II subunit 2 (695 aa).

One can recognise a Ku domain in the interval 229-461 (FSIGNRDSKD…IDFAVSNYID (233 aa)).

This sequence belongs to the ku80 family. In terms of assembly, heterodimer of pku70 and pku80.

Its subcellular location is the nucleus. The protein resides in the chromosome. It localises to the telomere. It catalyses the reaction ATP + H2O = ADP + phosphate + H(+). Its function is as follows. Single-stranded DNA-dependent ATP-dependent helicase. Involved in non-homologous end joining (NHEJ) DNA double strand break repair. DNA-binding is sequence-independent but has a high affinity to nicks in double-stranded DNA and to the ends of duplex DNA. Binds to naturally occurring chromosomal ends, and therefore provides chromosomal end protection. Required also for telomere recombination to repair telomeric ends in the absence of telomerase. ku70, of the ku70/ku80 heterodimer, binds to the stem loop of tlc1, the RNA component of telomerase. Involved in telomere maintenance. Interacts with telomeric repeats and subtelomeric sequences thereby controlling telomere length and protecting against subtelomeric rearrangement. Required for mating-type switching. The chain is ATP-dependent DNA helicase II subunit 2 (pku80) from Schizosaccharomyces pombe (strain 972 / ATCC 24843) (Fission yeast).